Reading from the N-terminus, the 312-residue chain is Ribosomal protein L11 methyltransferase (312 aa).

Thr162, Gly183, Asp205, and Asn248 together coordinate S-adenosyl-L-methionine.

This sequence belongs to the methyltransferase superfamily. PrmA family.

Its subcellular location is the cytoplasm. It catalyses the reaction L-lysyl-[protein] + 3 S-adenosyl-L-methionine = N(6),N(6),N(6)-trimethyl-L-lysyl-[protein] + 3 S-adenosyl-L-homocysteine + 3 H(+). Its function is as follows. Methylates ribosomal protein L11. The chain is Ribosomal protein L11 methyltransferase from Bacillus cereus (strain B4264).